A 1043-amino-acid polypeptide reads, in one-letter code: Rho GTPase-activating protein gacZ (1043 aa).

The interval 1-44 is disordered; that stretch reads MTTTNTSIFGPRVNNSKFNNNNNNNNNNNNNNNNTSNNNNSNII. A compositionally biased stretch (low complexity) spans 14–44; sequence NNSKFNNNNNNNNNNNNNNNNTSNNNNSNII. Zn(2+) is bound by residues cysteine 71, cysteine 74, cysteine 82, cysteine 85, cysteine 91, histidine 95, histidine 103, and cysteine 107. The MYND-type; atypical zinc finger occupies 71 to 107; sequence CVICKSKNVQVCTGCLMVYYCGAEHQNIDWPNHKSLC. Disordered stretches follow at residues 137 to 163, 199 to 532, 546 to 594, 614 to 690, 706 to 772, and 801 to 842; these read SGNR…NNNN, HLQQ…NNSN, DGLS…NGNR, FYQS…TNNN, NTSQ…QLSA, and NKVS…NNNN. A compositionally biased stretch (low complexity) spans 201–225; it reads QQQIQQTQQTQQQPPPTTTSIPTQP. Residues 241-253 are compositionally biased toward polar residues; it reads SFKSSSSGDNTPI. Low complexity-rich tracts occupy residues 254–293 and 307–411; these read NQSP…NMSG and NSIN…TNEE. Polar residues predominate over residues 453 to 466; it reads GTLKQSSSSDSIYF. 2 stretches are compositionally biased toward low complexity: residues 467-532 and 547-594; these read NNNN…NNSN and GLSY…NGNR. Positions 615–625 are enriched in polar residues; sequence YQSNKNQSNGY. Positions 644–671 are enriched in acidic residues; it reads ENDDSHEECDDDDDDDDGGGQDGDDGLD. Low complexity-rich tracts occupy residues 726-736, 752-771, 801-821, and 829-842; these read DTQSQSTNSTT, SSDD…SQLS, NKVS…NNNN, and NNNN…NNNN. Residues 825–852 adopt a coiled-coil conformation; sequence DHNENNNNNNNNINNNNNNNNNNIENII. In terms of domain architecture, Rho-GAP spans 855–1043; that stretch reads IPLEEAVKKS…FGIQTYNYNS (189 aa).

The protein localises to the cytoplasm. Rho GTPase-activating protein involved in the signal transduction pathway. This chain is Rho GTPase-activating protein gacZ (gacZ), found in Dictyostelium discoideum (Social amoeba).